The sequence spans 93 residues: Phosphoribosyl-ATP pyrophosphatase (93 aa).

Belongs to the PRA-PH family.

It localises to the cytoplasm. The catalysed reaction is 1-(5-phospho-beta-D-ribosyl)-ATP + H2O = 1-(5-phospho-beta-D-ribosyl)-5'-AMP + diphosphate + H(+). It functions in the pathway amino-acid biosynthesis; L-histidine biosynthesis; L-histidine from 5-phospho-alpha-D-ribose 1-diphosphate: step 2/9. The chain is Phosphoribosyl-ATP pyrophosphatase from Mycolicibacterium vanbaalenii (strain DSM 7251 / JCM 13017 / BCRC 16820 / KCTC 9966 / NRRL B-24157 / PYR-1) (Mycobacterium vanbaalenii).